The following is a 421-amino-acid chain: D-amino acid dehydrogenase (421 aa).

3–17 (VLILGSGVIGVTSAY) is a binding site for FAD.

It belongs to the DadA oxidoreductase family. FAD serves as cofactor.

It carries out the reaction a D-alpha-amino acid + A + H2O = a 2-oxocarboxylate + AH2 + NH4(+). Functionally, oxidative deamination of D-amino acids. The chain is D-amino acid dehydrogenase from Bradyrhizobium diazoefficiens (strain JCM 10833 / BCRC 13528 / IAM 13628 / NBRC 14792 / USDA 110).